Here is a 638-residue protein sequence, read N- to C-terminus: Bifunctional protein glk (638 aa).

Residues 1–20 are disordered; it reads MSTGVQTKAAPGAGQHADGP. The tract at residues 1-341 is glucokinase; that stretch reads MSTGVQTKAA…QLSNRAGGSS (341 aa). 24 to 29 provides a ligand contact to ATP; the sequence is ADIGGT. Residues 342–418 enclose the HTH rpiR-type domain; that stretch reads SAVFERIRQM…LKLATGLTGT (77 aa). The segment at 342–638 is putative HTH-type transcriptional regulator; it reads SAVFERIRQM…SHGAASSARD (297 aa). Residues 378–397 constitute a DNA-binding region (H-T-H motif); that stretch reads IVDIARKADVSQPTVIRFCR. The SIS domain occupies 462–601; that stretch reads AIDLLNGARR…AVGVAIRRAV (140 aa).

The protein in the N-terminal section; belongs to the bacterial glucokinase family.

Its subcellular location is the cytoplasm. The enzyme catalyses D-glucose + ATP = D-glucose 6-phosphate + ADP + H(+). This chain is Bifunctional protein glk (glk), found in Paraburkholderia xenovorans (strain LB400).